The chain runs to 785 residues: MNEKSLRVLEFNKIKDELKKYTQTSAAKDLIERLHPYESAYEVREHLMETEEAFKISIKKGDAPFSGLYDIREAISKAQRRFTLFPSELLRVANLLRASRRFKGYVKSDDLSEKYEVLESITEGLVPLNGLEEEISKCIIGEEEISDRASTTLFNIRRSLKDKTSSIKARVNSLIRTYSSHLQENIYTVRGERYVLPVKVEHKGAVPGLVHDQSASGATLFIEPMSLVDLNNEIKELRLKEKAEIDRILAFLSGKVYENVDVIKVDADILWELDFIFAKAKYAQKLGAIMPIISEDGHFNIINAKHPLIDPKKVVENNIYLRDGITSVVITGPNTGGKTVTLKTVGLLHIMAMSGLMITASQGSTISFFKEVFADIGDEQSIEQSLSTFSSHMTNIVNIIDSADENSLVLFDELGAGTDPTEGAALAVSILENLRKRKTKVIATTHYSELKAYALKVDNVENASVEFDVETLRPTYRLLIGVPGKSNAFEISKRLGLPDYIIEDAREGISEETLKFEDLIQSLQHKNIKAQEHARKAESAKEEAVKLKEKYESKLDKFQDIREKAILNAQKEAKEIIKEAKEEADKILKDIRELERMGYSSDVRKLLEENRKKLKDKLEKTESKLNQPKEVGEAVTNVSEGDELYLPKFETKVMVLTNPDNKGDVQVQAGIMKIKVNIKDLRKTKETKIEKRQRKKKQMSLNLKSVATSVDLRGMDSEEATYTADKYLDDACMSGLSEVTIIHGKGTGVLRTAINDMLKRHPHVKSYRLGNYGEGGNGVTVVELK.

332-339 serves as a coordination point for ATP; the sequence is GPNTGGKT. The region spanning 710–785 is the Smr domain; it reads VDLRGMDSEE…GNGVTVVELK (76 aa).

Belongs to the DNA mismatch repair MutS family. MutS2 subfamily. Homodimer. Binds to stalled ribosomes, contacting rRNA.

Its function is as follows. Endonuclease that is involved in the suppression of homologous recombination and thus may have a key role in the control of bacterial genetic diversity. Functionally, acts as a ribosome collision sensor, splitting the ribosome into its 2 subunits. Detects stalled/collided 70S ribosomes which it binds and splits by an ATP-hydrolysis driven conformational change. Acts upstream of the ribosome quality control system (RQC), a ribosome-associated complex that mediates the extraction of incompletely synthesized nascent chains from stalled ribosomes and their subsequent degradation. Probably generates substrates for RQC. This Clostridium novyi (strain NT) protein is Endonuclease MutS2.